A 71-amino-acid chain; its full sequence is MGAAKVLLVVLAVMVAVPNLAEGRSPPQCQYTNCAAVLCPAVYCANAYTPPCGCCDICPPQKYGGGYRPRG.

Residues 1–23 (MGAAKVLLVVLAVMVAVPNLAEG) form the signal peptide. 4 disulfide bridges follow: Cys29–Cys58, Cys34–Cys54, Cys39–Cys52, and Cys44–Cys55. Arg70 carries the arginine amide; partial modification.

The protein belongs to the paralithocin family. In terms of processing, the amidated form is probably the active form.

Its function is as follows. Has antibacterial activity, mainly against marine Gram-positive bacteria like C.maltaromaticum (MIC=50 uM), C.mobile (MIC=50 uM), C.divergens (MIC=50 uM) and C.funditum (MIC=25 uM) but also against C.glutamicum (MIC=12.5 uM). Has very little or no activity against Gram-negative bacteria. The chain is Paralithocin 2 from Paralithodes camtschaticus (Red king crab).